Here is a 906-residue protein sequence, read N- to C-terminus: uncharacterized protein (906 aa).

Disordered stretches follow at residues 231-322 (KEDA…PSTI) and 865-906 (AGAY…DEDE). Over residues 236–250 (TTKQTTTTTTTTPQT) the composition is skewed to low complexity. A compositionally biased stretch (pro residues) spans 264–281 (TPTPAPAPKPTTPKPTPA). Residues 302-314 (SVNNIPTPSDTNE) show a composition bias toward polar residues. Over residues 867–906 (AYEDDDDDEGEGNEDDEDNDENEDEDEGEGEGDSSEDEDE) the composition is skewed to acidic residues.

This is an uncharacterized protein from Dictyostelium sp. (strain GA11) (Slime mold).